Consider the following 224-residue polypeptide: 2,5-diamino-6-ribosylamino-4(3H)-pyrimidinone 5'-phosphate reductase (224 aa).

Residues threonine 57, aspartate 61, 82 to 85 (STAN), valine 131, and 153 to 156 (GASI) contribute to the NADP(+) site.

It belongs to the HTP reductase family. In terms of assembly, homodimer.

The enzyme catalyses 2,5-diamino-6-(1-D-ribitylamino)pyrimidin-4(3H)-one 5'-phosphate + NADP(+) = 2,5-diamino-6-(1-D-ribosylamino)pyrimidin-4(3H)-one 5'-phosphate + NADPH + H(+). The catalysed reaction is 2,5-diamino-6-(1-D-ribitylamino)pyrimidin-4(3H)-one 5'-phosphate + NAD(+) = 2,5-diamino-6-(1-D-ribosylamino)pyrimidin-4(3H)-one 5'-phosphate + NADH + H(+). It participates in cofactor biosynthesis; riboflavin biosynthesis. Its function is as follows. Catalyzes an early step in riboflavin biosynthesis, the NADPH-dependent reduction of the ribose side chain of 2,5-diamino-6-ribosylamino-4(3H)-pyrimidinone 5'-phosphate, yielding 2,5-diamino-6-ribitylamino-4(3H)-pyrimidinone 5'-phosphate. The chain is 2,5-diamino-6-ribosylamino-4(3H)-pyrimidinone 5'-phosphate reductase (ribD2) from Aquifex aeolicus (strain VF5).